The following is a 149-amino-acid chain: Protein SprT-like (149 aa).

The region spanning 4-144 (TDYVKQVSLE…GLCRGKLLLV (141 aa)) is the SprT-like domain. His64 contacts Zn(2+). The active site involves Glu65. His68 is a Zn(2+) binding site.

The protein belongs to the SprT family. Zn(2+) is required as a cofactor.

Its subcellular location is the cytoplasm. This Streptococcus pneumoniae serotype 4 (strain ATCC BAA-334 / TIGR4) protein is Protein SprT-like.